The sequence spans 138 residues: Basic phospholipase A2 myotoxin I (138 aa).

The signal sequence occupies residues 1–16 (MRTLWIMAVLLVGVEG). 7 cysteine pairs are disulfide-bonded: Cys42–Cys131, Cys44–Cys60, Cys59–Cys111, Cys65–Cys138, Cys66–Cys104, Cys73–Cys97, and Cys91–Cys102. Ca(2+) is bound by residues Tyr43, Gly45, and Gly47. The active site involves His63. Residue Asp64 participates in Ca(2+) binding. The active site involves Asp105.

Belongs to the phospholipase A2 family. Group II subfamily. D49 sub-subfamily. As to quaternary structure, monomer. Homodimer; non-covalently linked (alternative/compact dimer conformation). Requires Ca(2+) as cofactor. In terms of tissue distribution, expressed by the venom gland.

It is found in the secreted. It carries out the reaction a 1,2-diacyl-sn-glycero-3-phosphocholine + H2O = a 1-acyl-sn-glycero-3-phosphocholine + a fatty acid + H(+). High level of membrane cholesterol content reduces cytolytic activity, whereas low level of membrane cholesterol content increases cytolytic activity. In terms of biological role, snake venom phospholipase A2 (PLA2) that displays local myotoxic activity. It also displays anticoagulant action in plasma and edema-inducing activities. In addition, it shows cytotoxic activity to a variety of cell types and bactericidal activity to a variety of Gram-negative and Gram-positive bacteria. PLA2 catalyzes the calcium-dependent hydrolysis of the 2-acyl groups in 3-sn-phosphoglycerides. In Bothrops asper (Terciopelo), this protein is Basic phospholipase A2 myotoxin I.